We begin with the raw amino-acid sequence, 277 residues long: Caspase-6 (277 aa).

Positions 1-5 are excised as a propeptide; the sequence is MTETD. Positions 25–27 are tri-arginine exosite; the sequence is KRR. Position 62 is a phosphoserine (Ser-62). His-104 is an active-site residue. A 130's region region spans residues 108-125; sequence NHIYAYDAKIEIQTLTGL. Cys-146 is a catalytic residue. A propeptide spanning residues 163–176 is cleaved from the precursor; the sequence is HQTDKLDDNVTQVD. Ser-240 is modified (phosphoserine). S-palmitoyl cysteine attachment occurs at residues Cys-247 and Cys-260.

It belongs to the peptidase C14A family. As to quaternary structure, heterotetramer that consists of two anti-parallel arranged heterodimers, each one formed by a 18 kDa (p18) and a 11 kDa (p11) subunits. Interacts with BIRC6/bruce. Interacts with RIPK3. Heterotetramer that consists of two anti-parallel arranged heterodimers, each one formed by a 18 kDa (Caspase-6 subunit p18) and a 11 kDa (Caspase-6 subunit p11) subunit. Phosphorylated by NUAK1; phosphorylation inhibits self-activation. Phosphorylation at Ser-240 by AMP-activated protein kinase (PRKAA1 or PRKAA2) inhibits autocleavage, preventing caspase activation, thereby preventing hepatocyte apoptosis. Post-translationally, palmitoylation by ZDHHC17 blocks dimerization and subsequent activation, leading to inhibit the cysteine protease activity. In terms of processing, can be cleaved and activated by different caspases, depending on the context. Cleaved and activated by caspase-8 (CASP8) and subsequently by caspase-3 (CASP3). Can also undergo autoactivation by mediating autocleavage at Asp-162 and Asp-176, while it is not able to cleave its N-terminal disordered prodomain. Cleaved and activated by CASP1, possibly in the context of inflammation.

It localises to the cytoplasm. The protein localises to the nucleus. The catalysed reaction is Strict requirement for Asp at position P1 and has a preferred cleavage sequence of Val-Glu-His-Asp-|-.. With respect to regulation, during activation, the N-terminal disordered prodomain is removed by cleavage. Concomitantly, double cleavage gives rise to a large 18-kDa and a small 11-kDa subunit. The two large and two small subunits then assemble to form the active CASP6 complex. Can be cleaved and activated by different caspases, depending on the context. Cleaved and activated by caspase-8 (CASP8) and subsequently by caspase-3 (CASP3). Can also undergo autoactivation by mediating autocleavage at Asp-162 and Asp-176, while it is not able to cleave its N-terminal disordered prodomain. Intramolecular cleavage at Asp-176 is a prerequisite for CASP6 self-activation. Cleaved and activated by CASP1 in neurons, possibly in the context of inflammation. Phosphorylation at Ser-240 inhibits autocleavage, preventing caspase activation. Its function is as follows. Cysteine protease that plays essential roles in programmed cell death, axonal degeneration, development and innate immunity. Acts as a non-canonical executioner caspase during apoptosis: localizes in the nucleus and cleaves the nuclear structural protein NUMA1 and lamin A/LMNA thereby inducing nuclear shrinkage and fragmentation. Lamin-A/LMNA cleavage is required for chromatin condensation and nuclear disassembly during apoptotic execution. Acts as a regulator of liver damage by promoting hepatocyte apoptosis: in absence of phosphorylation by AMP-activated protein kinase (AMPK), catalyzes cleavage of BID, leading to cytochrome c release, thereby participating in nonalcoholic steatohepatitis. Cleaves PARK7/DJ-1 in cells undergoing apoptosis. Involved in intrinsic apoptosis by mediating cleavage of RIPK1. Furthermore, cleaves many transcription factors such as NF-kappa-B and cAMP response element-binding protein/CREBBP. Cleaves phospholipid scramblase proteins XKR4 and XKR9. In addition to apoptosis, involved in different forms of programmed cell death. Plays an essential role in defense against viruses by acting as a central mediator of the ZBP1-mediated pyroptosis, apoptosis, and necroptosis (PANoptosis), independently of its cysteine protease activity. PANoptosis is a unique inflammatory programmed cell death, which provides a molecular scaffold that allows the interactions and activation of machinery required for inflammasome/pyroptosis, apoptosis and necroptosis. Mechanistically, interacts with RIPK3 and enhances the interaction between RIPK3 and ZBP1, leading to ZBP1-mediated inflammasome activation and cell death. Plays an essential role in axon degeneration during axon pruning which is the remodeling of axons during neurogenesis but not apoptosis. Regulates B-cell programs both during early development and after antigen stimulation. This chain is Caspase-6, found in Rattus norvegicus (Rat).